We begin with the raw amino-acid sequence, 167 residues long: uncharacterized protein (167 aa).

The stretch at 70–118 (KIVELRKAMESIITELAYIKGELKGLQEKGESKVERKEIIEEKIQKAMV) forms a coiled coil. Basic and acidic residues predominate over residues 128–155 (EKEERKPAKESKRREHDVIIPEGKKEER). Residues 128 to 167 (EKEERKPAKESKRREHDVIIPEGKKEERTDDGEDGLIVCD) form a disordered region.

This is an uncharacterized protein from Archaeoglobus fulgidus (strain ATCC 49558 / DSM 4304 / JCM 9628 / NBRC 100126 / VC-16).